We begin with the raw amino-acid sequence, 447 residues long: Transcription factor azf1 (447 aa).

Disordered regions lie at residues 125 to 155 and 174 to 199; these read HNGA…NEVE and QSPG…PQSY. Low complexity predominate over residues 127–139; sequence GASQQPPGAQSSS. Positions 140–155 are enriched in polar residues; the sequence is NEEGAQGKSSSSNEVE. 4 consecutive C2H2-type zinc fingers follow at residues 225-249, 255-279, 285-307, and 313-338; these read YACT…MRAH, FVCK…QRRH, FSCD…KITH, and FTCL…NKFH. The segment at 377–447 is disordered; sequence NKGIKGRGKD…EPYFIERQAH (71 aa). Residues 397–416 show a composition bias toward basic and acidic residues; it reads PGSESRRRIEPLSSTDDKMR. Positions 421-431 are enriched in polar residues; the sequence is GDTSMYNGGSS.

It localises to the nucleus. Transcription factor that acts as a positive regulator of ochratoxin A (OTA) biosynthesis via controlling the expression of antioxidant genes and oxidative phosphorylation genes. The sequence is that of Transcription factor azf1 from Aspergillus niger (strain ATCC MYA-4892 / CBS 513.88 / FGSC A1513).